We begin with the raw amino-acid sequence, 361 residues long: Putative agmatine deiminase (361 aa).

Catalysis depends on C354, which acts as the Amidino-cysteine intermediate.

Belongs to the agmatine deiminase family.

The enzyme catalyses agmatine + H2O = N-carbamoylputrescine + NH4(+). The chain is Putative agmatine deiminase from Streptococcus pneumoniae (strain ATCC 700669 / Spain 23F-1).